The sequence spans 407 residues: Imidazolonepropionase (407 aa).

Fe(3+)-binding residues include His-73 and His-75. Zn(2+) is bound by residues His-73 and His-75. The 4-imidazolone-5-propanoate site is built by Arg-82, Tyr-145, and His-178. Residue Tyr-145 participates in N-formimidoyl-L-glutamate binding. His-243 lines the Fe(3+) pocket. His-243 is a Zn(2+) binding site. Gln-246 contacts 4-imidazolone-5-propanoate. Residue Asp-318 coordinates Fe(3+). Position 318 (Asp-318) interacts with Zn(2+). Residues Asn-320 and Gly-322 each coordinate N-formimidoyl-L-glutamate. Thr-323 contacts 4-imidazolone-5-propanoate.

The protein belongs to the metallo-dependent hydrolases superfamily. HutI family. The cofactor is Zn(2+). Fe(3+) serves as cofactor.

It localises to the cytoplasm. It catalyses the reaction 4-imidazolone-5-propanoate + H2O = N-formimidoyl-L-glutamate. Its pathway is amino-acid degradation; L-histidine degradation into L-glutamate; N-formimidoyl-L-glutamate from L-histidine: step 3/3. Functionally, catalyzes the hydrolytic cleavage of the carbon-nitrogen bond in imidazolone-5-propanoate to yield N-formimidoyl-L-glutamate. It is the third step in the universal histidine degradation pathway. The protein is Imidazolonepropionase of Serratia proteamaculans (strain 568).